Here is a 1002-residue protein sequence, read N- to C-terminus: ATP-dependent DNA helicase MPH1 (1002 aa).

The region spanning 108-275 is the Helicase ATP-binding domain; sequence IVRCALFENV…EVVNNLHISK (168 aa). 121–128 serves as a coordination point for ATP; that stretch reads IPTGTGKT. A DEAH box motif is present at residues 223–226; the sequence is DEAH. The region spanning 506-669 is the Helicase C-terminal domain; sequence DEETYIRKNK…ALEYTKSDRI (164 aa). The span at 531–551 shows a compositional bias: basic and acidic residues; the sequence is ENRVEEEKKRQKEQAKLERTG. Disordered stretches follow at residues 531 to 569 and 799 to 843; these read ENRVEEEKKRQKEQAKLERTGRRTGSSEEAQLSGMNQKQ and AKSQ…DSHT. The span at 553-568 shows a compositional bias: polar residues; it reads RTGSSEEAQLSGMNQK.

It belongs to the DEAD box helicase family. DEAH subfamily. FANCM sub-subfamily. As to quaternary structure, interacts with the MHF histone-fold complex to form the FANCM-MHF complex.

The protein localises to the nucleus. It catalyses the reaction ATP + H2O = ADP + phosphate + H(+). In terms of biological role, ATP-dependent DNA helicase involved in DNA damage repair by homologous recombination and in genome maintenance. Capable of unwinding D-loops. Plays a role in limiting crossover recombinants during mitotic DNA double-strand break (DSB) repair. Component of a FANCM-MHF complex which promotes gene conversion at blocked replication forks, probably by reversal of the stalled fork. This Kluyveromyces lactis (strain ATCC 8585 / CBS 2359 / DSM 70799 / NBRC 1267 / NRRL Y-1140 / WM37) (Yeast) protein is ATP-dependent DNA helicase MPH1.